Consider the following 145-residue polypeptide: Secreted RxLR effector protein 100 (145 aa).

The N-terminal stretch at 1-19 is a signal peptide; that stretch reads MRYLLLTFFTFHCQMVADA. The short motif at 27-30 is the RxLR element; that stretch reads RLLR. The segment at 38 to 77 is disordered; the sequence is SGEGKIEEAGMIVTTGAPTPENETMEHNEVPQSTTDTDQK. An N-linked (GlcNAc...) asparagine glycan is attached at Asn59.

The protein belongs to the RxLR effector family.

The protein resides in the secreted. It is found in the host nucleus. Its function is as follows. Secreted effector that dos not suppress the host cell death induced by cell death-inducing proteins. The polypeptide is Secreted RxLR effector protein 100 (Plasmopara viticola (Downy mildew of grapevine)).